Here is a 1684-residue protein sequence, read N- to C-terminus: A-kinase anchor protein 12 (1684 aa).

A disordered region spans residues 1-124 (MGAGSSTEQR…DITKDEQEET (124 aa)). Gly2 carries N-myristoyl glycine lipidation. Ser11, Ser18, Ser22, and Ser27 each carry phosphoserine. The segment covering 30 to 48 (GPAAEASGAAGDPADADPA) has biased composition (low complexity). Positions 75-86 (ESQDGQEEEVTV) are enriched in acidic residues. Basic and acidic residues predominate over residues 89 to 105 (VGQRESEDVKEKDRAKE). Position 136 is a phosphoserine (Ser136). 2 disordered regions span residues 175 to 281 (SDTV…ETTS) and 296 to 353 (KKTS…SADY). Residues 212 to 227 (ASKESELKQSTEKQEG) show a composition bias toward basic and acidic residues. Over residues 228 to 247 (TLKQAQSSTEIPLQAESGQG) the composition is skewed to polar residues. Phosphoserine occurs at positions 234 and 244. The span at 251-266 (EAAKDGEENREKEPTK) shows a compositional bias: basic and acidic residues. Positions 253-543 (AKDGEENREK…QHIQTESPES (291 aa)) are involved in PKC-binding. Residues Ser270 and Ser273 each carry the phosphoserine modification. Over residues 270–281 (SPTSPVSNETTS) the composition is skewed to polar residues. A compositionally biased stretch (basic and acidic residues) spans 302–320 (KPKEDDLETSEKRKEQEAE). Positions 321 to 342 (KVDEEEGEKTEPAPAEEQEPAE) are enriched in acidic residues. Thr330 bears the Phosphothreonine mark. Residue Ser350 is modified to Phosphoserine. Tyr353 carries the post-translational modification Phosphotyrosine. A phosphoserine mark is found at Ser371 and Ser467. Positions 421-479 (GSGESLPPEKLAETQEVPQEAEPVEELMKTKEVCVSGGDHTQLTDLSPEEKMLPKHPEG) are disordered. Residues 468 to 478 (PEEKMLPKHPE) are compositionally biased toward basic and acidic residues. Ser489, Ser505, and Ser507 each carry phosphoserine. Residues 492–825 (RIKVQGSPLK…INEDDPDVPA (334 aa)) are disordered. Residues 497–511 (GSPLKKLFSSSGLKK) show a composition bias toward low complexity. Residues 512 to 521 (LSGKKQKGKR) show a composition bias toward basic residues. A phosphoserine mark is found at Ser540, Ser543, Ser584, Ser598, Ser613, and Ser615. The short motif at 593–613 (ITPWASFKKMVTPKKRVRRPS) is the AKAP CaM-binding 1 element. Positions 611-625 (RPSESDKEEELDKVK) are enriched in basic and acidic residues. Low complexity predominate over residues 626–637 (SATLSSTESTAS). Phosphothreonine is present on Thr628. Phosphoserine occurs at positions 630, 631, 634, and 637. Basic and acidic residues predominate over residues 641–660 (DEVRAVGEEQRSEEPKRRVD). Phosphoserine is present on residues Ser682, Ser683, and Ser684. The span at 696-710 (DGHRAEEASKDKEAD) shows a compositional bias: basic and acidic residues. Over residues 714–723 (ASTQEQDQAH) the composition is skewed to polar residues. Residues 724–741 (GSSSPEPAGSPSEGEGVS) show a composition bias toward low complexity. Ser733, Ser745, Ser767, and Ser786 each carry phosphoserine. The AKAP CaM-binding 2 signature appears at 740-760 (VSTWESFKRLVTPRKKSKSKL). Residues 781 to 801 (EESWVSIKKFIPGRRKKRADG) carry the AKAP CaM-binding 3 motif. Thr871 is modified (phosphothreonine). Position 873 is a phosphoserine (Ser873). The disordered stretch occupies residues 970-1001 (TEASGAEETTDMVSAVSQLSDSPDTTEEATPV). Positions 980–992 (DMVSAVSQLSDSP) are enriched in polar residues. Residue Lys1030 forms a Glycyl lysine isopeptide (Lys-Gly) (interchain with G-Cter in SUMO1) linkage. Disordered regions lie at residues 1055-1106 (VEED…VTED), 1121-1211 (LMEQ…DVLE), 1232-1365 (EGEA…DKAD), and 1391-1492 (TVAT…REKI). Ser1059 carries the post-translational modification Phosphoserine. Over residues 1130 to 1176 (SSETLTDSETNGSTPLADSDTPNGTQQDETVDSQDSNAIAAVKQSQV) the composition is skewed to polar residues. 2 stretches are compositionally biased toward basic and acidic residues: residues 1198–1210 (QEEH…RDVL) and 1239–1254 (DGEK…ELEV). Ser1292 is subject to Phosphoserine. Residues 1293 to 1331 (PEKREMGTDVEKEETETKTEQASEEHEQETAAPEHEGTH) are compositionally biased toward basic and acidic residues. Phosphoserine is present on residues Ser1351, Ser1355, and Ser1357. The segment covering 1467 to 1492 (QRSDEDNKPDAGPDAAGKESAAREKI) has biased composition (basic and acidic residues). Residues 1501-1514 (ELESKSNKIVQSVI) are RII-binding. Ser1546 and Ser1645 each carry phosphoserine. The tract at residues 1568-1684 (TLSAVAQEGL…QEPKGDLTES (117 aa)) is disordered. Over residues 1653-1684 (LTEEGDALKEEMNKAQTEEDDLQEPKGDLTES) the composition is skewed to basic and acidic residues.

As to quaternary structure, binds to dimeric RII-alpha regulatory subunit of PKC. In terms of tissue distribution, isoform 1 is predominantly found in the nervous system. Isoform 3 is testis specific.

Its subcellular location is the cytoplasm. It localises to the cytoskeleton. It is found in the membrane. Anchoring protein that mediates the subcellular compartmentation of protein kinase A (PKA) and protein kinase C (PKC). This is A-kinase anchor protein 12 (Akap12) from Mus musculus (Mouse).